The sequence spans 213 residues: Probable lipid phosphate phosphatase beta (213 aa).

The next 5 membrane-spanning stretches (helical) occupy residues 30-50, 67-87, 118-138, 158-178, and 181-201; these read PFLP…RFSF, VPFL…KLIF, VFFV…SMTG, VEVV…RILL, and HYVL…LFAL.

This sequence belongs to the PA-phosphatase related phosphoesterase family.

The protein resides in the membrane. This Arabidopsis thaliana (Mouse-ear cress) protein is Probable lipid phosphate phosphatase beta (LPPB).